The following is a 307-amino-acid chain: Holliday junction branch migration complex subunit RuvB (307 aa).

The interval 1 to 167 (MKLQIKPPNN…FGMILNIDYY (167 aa)) is large ATPase domain (RuvB-L). ATP is bound by residues I5, G48, K51, T52, T53, 114-116 (DDF), R157, Y167, and R204. T52 is a binding site for Mg(2+). Residues 168 to 233 (SNQEIERIVS…DLAALFKSLM (66 aa)) form a small ATPAse domain (RuvB-S) region. The interval 236 to 307 (KNGLQSIDVQ…RTGRNYLTSC (72 aa)) is head domain (RuvB-H). Residues K289 and R294 each coordinate DNA.

This sequence belongs to the RuvB family. Homohexamer. Forms an RuvA(8)-RuvB(12)-Holliday junction (HJ) complex. HJ DNA is sandwiched between 2 RuvA tetramers; dsDNA enters through RuvA and exits via RuvB. An RuvB hexamer assembles on each DNA strand where it exits the tetramer. Each RuvB hexamer is contacted by two RuvA subunits (via domain III) on 2 adjacent RuvB subunits; this complex drives branch migration. In the full resolvosome a probable DNA-RuvA(4)-RuvB(12)-RuvC(2) complex forms which resolves the HJ.

The protein resides in the cytoplasm. It carries out the reaction ATP + H2O = ADP + phosphate + H(+). The RuvA-RuvB-RuvC complex processes Holliday junction (HJ) DNA during genetic recombination and DNA repair, while the RuvA-RuvB complex plays an important role in the rescue of blocked DNA replication forks via replication fork reversal (RFR). RuvA specifically binds to HJ cruciform DNA, conferring on it an open structure. The RuvB hexamer acts as an ATP-dependent pump, pulling dsDNA into and through the RuvAB complex. RuvB forms 2 homohexamers on either side of HJ DNA bound by 1 or 2 RuvA tetramers; 4 subunits per hexamer contact DNA at a time. Coordinated motions by a converter formed by DNA-disengaged RuvB subunits stimulates ATP hydrolysis and nucleotide exchange. Immobilization of the converter enables RuvB to convert the ATP-contained energy into a lever motion, pulling 2 nucleotides of DNA out of the RuvA tetramer per ATP hydrolyzed, thus driving DNA branch migration. The RuvB motors rotate together with the DNA substrate, which together with the progressing nucleotide cycle form the mechanistic basis for DNA recombination by continuous HJ branch migration. Branch migration allows RuvC to scan DNA until it finds its consensus sequence, where it cleaves and resolves cruciform DNA. This chain is Holliday junction branch migration complex subunit RuvB, found in Mycoplasma pneumoniae (strain ATCC 29342 / M129 / Subtype 1) (Mycoplasmoides pneumoniae).